The sequence spans 147 residues: Large ribosomal subunit protein uL13 (147 aa).

This sequence belongs to the universal ribosomal protein uL13 family. Part of the 50S ribosomal subunit.

This protein is one of the early assembly proteins of the 50S ribosomal subunit, although it is not seen to bind rRNA by itself. It is important during the early stages of 50S assembly. This Corynebacterium diphtheriae (strain ATCC 700971 / NCTC 13129 / Biotype gravis) protein is Large ribosomal subunit protein uL13.